Reading from the N-terminus, the 251-residue chain is NADPH-dependent oxidoreductase (251 aa).

The protein belongs to the flavin oxidoreductase frp family. The cofactor is FMN.

Reduces FMN, organic nitro compounds and disulfide DTNB. Involved in maintenance of the cellular redox state and the disulfide stress response. The sequence is that of NADPH-dependent oxidoreductase (nfrA) from Staphylococcus aureus (strain MSSA476).